A 128-amino-acid chain; its full sequence is Aspartate 1-decarboxylase (128 aa).

S25 acts as the Schiff-base intermediate with substrate; via pyruvic acid in catalysis. S25 bears the Pyruvic acid (Ser) mark. T57 serves as a coordination point for substrate. Catalysis depends on Y58, which acts as the Proton donor. 73 to 75 is a binding site for substrate; that stretch reads GAA.

Belongs to the PanD family. Heterooctamer of four alpha and four beta subunits. The cofactor is pyruvate. In terms of processing, is synthesized initially as an inactive proenzyme, which is activated by self-cleavage at a specific serine bond to produce a beta-subunit with a hydroxyl group at its C-terminus and an alpha-subunit with a pyruvoyl group at its N-terminus.

The protein resides in the cytoplasm. The enzyme catalyses L-aspartate + H(+) = beta-alanine + CO2. Its pathway is cofactor biosynthesis; (R)-pantothenate biosynthesis; beta-alanine from L-aspartate: step 1/1. Its function is as follows. Catalyzes the pyruvoyl-dependent decarboxylation of aspartate to produce beta-alanine. In Chlorobium luteolum (strain DSM 273 / BCRC 81028 / 2530) (Pelodictyon luteolum), this protein is Aspartate 1-decarboxylase.